A 210-amino-acid polypeptide reads, in one-letter code: Eukaryotic translation initiation factor 2 subunit gamma (210 aa).

Residues 1–196 enclose the tr-type G domain; it reads IGHVAHGKST…HLVETITPPR (196 aa). Positions 2–9 are G1; the sequence is GHVAHGKS. 5 to 10 serves as a coordination point for GTP; the sequence is AHGKST. A G2 region spans residues 30 to 34; the sequence is NITIK. Residues 85 to 88 are G3; it reads DCPG. Residues 141-144 and 174-176 contribute to the GTP site; these read NKID and SAI. Residues 141-144 form a G4 region; sequence NKID. Residues 174–176 are G5; sequence SAI.

The protein belongs to the TRAFAC class translation factor GTPase superfamily. Classic translation factor GTPase family. EIF2G subfamily. In terms of assembly, eukaryotic translation initiation factor 2 eIF2 is a heterotrimeric complex composed of an alpha, a beta and a gamma subunit. The factors eIF-1, eIF-2, eIF-3, TIF5/eIF-5 and methionyl-tRNAi form a multifactor complex (MFC) that may bind to the 40S ribosome.

Its subcellular location is the cytoplasm. The protein localises to the cytosol. The catalysed reaction is GTP + H2O = GDP + phosphate + H(+). In terms of biological role, as a subunit of eukaryotic initiation factor 2 eIF2, involved in the early steps of protein synthesis. In the presence of GTP, eIF-2 forms a ternary complex with initiator tRNA Met-tRNAi and then recruits the 40S ribosomal complex and initiation factors eIF-1, eIF-1A and eIF-3 to form the 43S pre-initiation complex (43S PIC), a step that determines the rate of protein translation. The 43S PIC binds to mRNA and scans downstream to the initiation codon, where it forms a 48S initiation complex by codon-anticodon base pairing. This leads to the displacement of eIF-1 to allow GTPase-activating protein (GAP) eIF-5-mediated hydrolysis of eIF2-bound GTP. Hydrolysis of GTP and release of Pi, which makes GTP hydrolysis irreversible, causes the release of the eIF-2-GDP binary complex from the 40S subunit, an event that is essential for the subsequent joining of the 60S ribosomal subunit to form an elongation-competent 80S ribosome. In order for eIF-2 to recycle and catalyze another round of initiation, the GDP bound to eIF-2 must be exchanged with GTP by way of a reaction catalyzed by GDP-GTP exchange factor (GEF) eIF-2B. In Spironucleus vortens, this protein is Eukaryotic translation initiation factor 2 subunit gamma.